The sequence spans 264 residues: Thiazole synthase (264 aa).

Residue Lys106 is the Schiff-base intermediate with DXP of the active site. 1-deoxy-D-xylulose 5-phosphate-binding positions include Gly167, 193–194, and 215–216; these read AG and NS.

The protein belongs to the ThiG family. Homotetramer. Forms heterodimers with either ThiH or ThiS.

Its subcellular location is the cytoplasm. The catalysed reaction is [ThiS sulfur-carrier protein]-C-terminal-Gly-aminoethanethioate + 2-iminoacetate + 1-deoxy-D-xylulose 5-phosphate = [ThiS sulfur-carrier protein]-C-terminal Gly-Gly + 2-[(2R,5Z)-2-carboxy-4-methylthiazol-5(2H)-ylidene]ethyl phosphate + 2 H2O + H(+). The protein operates within cofactor biosynthesis; thiamine diphosphate biosynthesis. In terms of biological role, catalyzes the rearrangement of 1-deoxy-D-xylulose 5-phosphate (DXP) to produce the thiazole phosphate moiety of thiamine. Sulfur is provided by the thiocarboxylate moiety of the carrier protein ThiS. In vitro, sulfur can be provided by H(2)S. The polypeptide is Thiazole synthase (Prochlorococcus marinus (strain MIT 9301)).